The following is a 358-amino-acid chain: Extracellular phospholipase C (358 aa).

The protein localises to the secreted. This is Extracellular phospholipase C (plcA) from Dickeya chrysanthemi (Pectobacterium chrysanthemi).